The primary structure comprises 347 residues: MKPPILIIIMSTVMSGTMIVLTSSHWLLIWIGFEMNMLAIIPILMKNHTPRATEASTKYFLTQATASMLLMMGIIINLMFSGEWSISKIPNPIASGLVTIALTMKLGMAPFHFWVPEVTQGISLSSGMILLTWQKIAPLSILYQISPSINPKLLITMAIASVLIGGWGGLNQTQLRKILAYSSIAHMGWMAVILTYNPTLMILNLTIYITMTLSTFMLFMHNSSTTTLSLSNTWNKLPLMTSLILVLMMSLGGLPPLSGFAPKWMIIQELTKNDMIILPTFMAITALLNLYFYMRLSYTTALTMFPSVNNMKMKWQFESAKKIILLPPLIIISTMLLPMTPMMSILE.

The next 11 helical transmembrane spans lie at 3–23 (PPILIIIMSTVMSGTMIVLTS), 25–45 (HWLLIWIGFEMNMLAIIPILM), 60–80 (FLTQATASMLLMMGIIINLMF), 96–116 (GLVTIALTMKLGMAPFHFWVP), 122–142 (ISLSSGMILLTWQKIAPLSIL), 153–173 (LLITMAIASVLIGGWGGLNQT), 178–198 (ILAYSSIAHMGWMAVILTYNP), 200–220 (LMILNLTIYITMTLSTFMLFM), 237–257 (LPLMTSLILVLMMSLGGLPPL), 274–294 (DMIILPTFMAITALLNLYFYM), and 323–343 (IILLPPLIIISTMLLPMTPMM).

The protein belongs to the complex I subunit 2 family. Core subunit of respiratory chain NADH dehydrogenase (Complex I) which is composed of 45 different subunits. Interacts with TMEM242.

It is found in the mitochondrion inner membrane. It carries out the reaction a ubiquinone + NADH + 5 H(+)(in) = a ubiquinol + NAD(+) + 4 H(+)(out). Functionally, core subunit of the mitochondrial membrane respiratory chain NADH dehydrogenase (Complex I) which catalyzes electron transfer from NADH through the respiratory chain, using ubiquinone as an electron acceptor. Essential for the catalytic activity and assembly of complex I. This Halichoerus grypus (Gray seal) protein is NADH-ubiquinone oxidoreductase chain 2.